The following is a 1203-amino-acid chain: DNA-directed RNA polymerase I subunit RPA135 (1203 aa).

N-acetylserine is present on Ser2. Ser81 bears the Phosphoserine mark. The C4-type zinc-finger motif lies at Cys1104–Cys1131. Ser1156 is subject to Phosphoserine.

It belongs to the RNA polymerase beta chain family. In terms of assembly, component of the RNA polymerase I (Pol I) complex consisting of 14 subunits: RPA135, RPA190, RPC40, RPA14, RPB5, RPO26, RPA43, RPB8, RPA12, RPB10, RPC19, RPC10, RPA49 and RPA34. The complex is composed of a horseshoe-shaped core containing ten subunits (RPA135, RPA190, RPB5, RPO26, RPB8, RPB10, RPC10, RPA12, RPC19 and RPC40) where RPA135 and RPA190 form the DNA-binding cleft. Outside of the core, RPA14 and RPA43 form the stalk that mediates interactions with transcription initiation factors and newly synthesized RNA.

Its subcellular location is the nucleus. The protein resides in the nucleolus. The catalysed reaction is RNA(n) + a ribonucleoside 5'-triphosphate = RNA(n+1) + diphosphate. In terms of biological role, DNA-dependent RNA polymerases catalyze the transcription of DNA into RNA using the four ribonucleoside triphosphates as substrates. Component of RNA polymerase I (Pol I) which synthesizes ribosomal RNA precursors. Besides, RNA polymerase I has intrinsic RNA cleavage activity. RPA190 and RPA135 both contribute to the polymerase catalytic activity and together form the Pol I active center. In addition, subunit RPA12 contributes a catalytic zinc ribbon that is required for RNA cleavage by Pol I. A single stranded DNA template strand of the promoter is positioned within the central active site cleft of Pol I. A bridging helix emanates from RPA190 and crosses the cleft near the catalytic site and is thought to promote translocation of Pol I by acting as a ratchet that moves the RNA-DNA hybrid through the active site by switching from straight to bent conformations at each step of nucleotide addition. The protein is DNA-directed RNA polymerase I subunit RPA135 (RPA135) of Saccharomyces cerevisiae (strain ATCC 204508 / S288c) (Baker's yeast).